The primary structure comprises 296 residues: Ribosomal RNA small subunit methyltransferase A (296 aa).

Residues asparagine 32, leucine 34, glycine 59, glutamate 80, aspartate 105, and asparagine 130 each coordinate S-adenosyl-L-methionine.

Belongs to the class I-like SAM-binding methyltransferase superfamily. rRNA adenine N(6)-methyltransferase family. RsmA subfamily.

It is found in the cytoplasm. It carries out the reaction adenosine(1518)/adenosine(1519) in 16S rRNA + 4 S-adenosyl-L-methionine = N(6)-dimethyladenosine(1518)/N(6)-dimethyladenosine(1519) in 16S rRNA + 4 S-adenosyl-L-homocysteine + 4 H(+). Its function is as follows. Specifically dimethylates two adjacent adenosines (A1518 and A1519) in the loop of a conserved hairpin near the 3'-end of 16S rRNA in the 30S particle. May play a critical role in biogenesis of 30S subunits. The polypeptide is Ribosomal RNA small subunit methyltransferase A (Lactiplantibacillus plantarum (strain ATCC BAA-793 / NCIMB 8826 / WCFS1) (Lactobacillus plantarum)).